Consider the following 293-residue polypeptide: Diaminopimelate epimerase (293 aa).

Substrate is bound by residues Asn-17, Gln-47, and Asn-67. Residue Cys-76 is the Proton donor of the active site. Substrate contacts are provided by residues Gly-77–Asn-78, Asn-164, Asn-197, and Glu-215–Arg-216. Cys-224 serves as the catalytic Proton acceptor. A substrate-binding site is contributed by Gly-225 to Ser-226.

Belongs to the diaminopimelate epimerase family. As to quaternary structure, homodimer.

Its subcellular location is the cytoplasm. The catalysed reaction is (2S,6S)-2,6-diaminopimelate = meso-2,6-diaminopimelate. It functions in the pathway amino-acid biosynthesis; L-lysine biosynthesis via DAP pathway; DL-2,6-diaminopimelate from LL-2,6-diaminopimelate: step 1/1. Functionally, catalyzes the stereoinversion of LL-2,6-diaminopimelate (L,L-DAP) to meso-diaminopimelate (meso-DAP), a precursor of L-lysine and an essential component of the bacterial peptidoglycan. In Rhodopseudomonas palustris (strain TIE-1), this protein is Diaminopimelate epimerase.